The primary structure comprises 345 residues: Alkaline phosphatase isozyme conversion protein (345 aa).

Residues 1-24 (MFSALRHRTAALALGVCFILPVHA) form the signal peptide. Positions 117, 143, 176, and 204 each coordinate Zn(2+).

This sequence belongs to the peptidase M28 family. M28C subfamily.

This protein, presumably an aminopeptidase, mediates the conversion of E.coli alkaline phosphatase isozyme 1, to isozymes 2 and 3 by removing, one by one, the two N-terminal arginine residues. The protein is Alkaline phosphatase isozyme conversion protein (iap) of Escherichia coli (strain K12).